The chain runs to 125 residues: MAKHRSNRLAETLKQEISQLIREELKDPRIGFVTVTSVEVADDLGNAKVYVSVLGDSQQAKDSLDALKRAAGFVRSEIGKRVRLRHAPEIVFKYDTSIEHGAHIAQLLRGVKQEEEKDEGESHDQ.

It belongs to the RbfA family. As to quaternary structure, monomer. Binds 30S ribosomal subunits, but not 50S ribosomal subunits or 70S ribosomes.

Its subcellular location is the cytoplasm. Its function is as follows. One of several proteins that assist in the late maturation steps of the functional core of the 30S ribosomal subunit. Associates with free 30S ribosomal subunits (but not with 30S subunits that are part of 70S ribosomes or polysomes). Required for efficient processing of 16S rRNA. May interact with the 5'-terminal helix region of 16S rRNA. This chain is Ribosome-binding factor A, found in Desulfitobacterium hafniense (strain DSM 10664 / DCB-2).